The following is a 529-amino-acid chain: Beta-hexosaminidase subunit alpha (529 aa).

Residues Met-1–Ala-22 form the signal peptide. Positions Leu-23 to His-88 are excised as a propeptide. A disulfide bridge links Cys-58 with Cys-104. 3 N-linked (GlcNAc...) asparagine glycosylation sites follow: Asn-115, Asn-157, and Asn-295. Cys-277 and Cys-328 are joined by a disulfide. Catalysis depends on Glu-323, which acts as the Proton donor. The tract at residues Asn-423–Arg-424 is critical for hydrolysis GM2 gangliosides. Cys-505 and Cys-522 form a disulfide bridge.

The protein belongs to the glycosyl hydrolase 20 family. There are 3 beta-hexosaminidase isozymes: isozyme A (hexosaminidase A) is a heterodimer composed of one subunit alpha and one subunit beta (chain A and B); isozyme B (hexosaminidase B) is a homodimer of two beta subunits (two chains A and B); isozyme S (hexosaminidase S) is a homodimer of two alpha subunits. The composition of the dimer (isozyme A versus isozyme S) has a significant effect on the substrate specificity of the alpha subunit active site. N-linked glycan at Asn-115 consists of Man(3)-GlcNAc(2). N-linked glycan at Asn-157 consists of either GlcNAc or GlcNAc(2)-Man(7-9). N-linked glycan at Asn-295 consists of either GlcNAc, GlcNAc-Fuc, or GlcNAc(2)-Man(4).

Its subcellular location is the lysosome. It catalyses the reaction Hydrolysis of terminal non-reducing N-acetyl-D-hexosamine residues in N-acetyl-beta-D-hexosaminides.. The enzyme catalyses N-acetyl-beta-D-galactosaminyl-(1-&gt;4)-beta-D-3-sulfogalactosyl-(1-&gt;4)-beta-D-glucosyl-(1&lt;-&gt;1')-ceramide + H2O = a beta-D-3-sulfogalactosyl-(1-&gt;4)-beta-D-glucosyl-(1&lt;-&gt;1')-ceramide + N-acetyl-beta-D-galactosamine. It carries out the reaction a ganglioside GM2 (d18:1(4E)) + H2O = a ganglioside GM3 (d18:1(4E)) + N-acetyl-beta-D-galactosamine. The catalysed reaction is a ganglioside GM2 + H2O = a ganglioside GM3 + N-acetyl-beta-D-galactosamine. It catalyses the reaction beta-D-GalNAc-(1-&gt;4)-alpha-L-IdoA-(1-&gt;3)-beta-D-GalNAc-4-sulfate-(1-&gt;4)-alpha-L-IdoA-(1-&gt;3)-D-GalNAc-4-sulfate + H2O = alpha-L-IdoA-(1-&gt;3)-beta-D-GalNAc-4-sulfate-(1-&gt;4)-alpha-L-IdoA-(1-&gt;3)-D-GalNAc-4-sulfate + N-acetyl-D-galactosamine. The enzyme catalyses N-acetyl-beta-D-6-sulfogalactosaminyl-(1-&gt;4)-alpha-L-iduronyl-(1-&gt;3)-N-acetyl-D-6-sulfogalactosamine + H2O = alpha-L-iduronyl-(1-&gt;3)-N-acetyl-D-6-sulfogalactosamine + N-acetyl-D-6-sulfogalactosamine. Its activity is regulated as follows. Addition of GM2A stimulates the hydrolysis of sulfated glycosphingolipid SM2 and the ganglioside GM2. Hydrolyzes the non-reducing end N-acetyl-D-hexosamine and/or sulfated N-acetyl-D-hexosamine of glycoconjugates, such as the oligosaccharide moieties from proteins and neutral glycolipids, or from certain mucopolysaccharides. The isozyme S is as active as the isozyme A on the anionic bis-sulfated glycans, the chondroitin-6-sulfate trisaccharide (C6S-3), and the dermatan sulfate pentasaccharide, and the sulfated glycosphingolipid SM2. The isozyme B does not hydrolyze each of these substrates, however hydrolyzes efficiently neutral oligosaccharide. Only the isozyme A is responsible for the degradation of GM2 gangliosides in the presence of GM2A. The polypeptide is Beta-hexosaminidase subunit alpha (Homo sapiens (Human)).